Here is a 345-residue protein sequence, read N- to C-terminus: Ribosomal RNA small subunit methyltransferase C (345 aa).

Belongs to the methyltransferase superfamily. RsmC family. As to quaternary structure, monomer.

It localises to the cytoplasm. It carries out the reaction guanosine(1207) in 16S rRNA + S-adenosyl-L-methionine = N(2)-methylguanosine(1207) in 16S rRNA + S-adenosyl-L-homocysteine + H(+). Its function is as follows. Specifically methylates the guanine in position 1207 of 16S rRNA in the 30S particle. The polypeptide is Ribosomal RNA small subunit methyltransferase C (Shewanella denitrificans (strain OS217 / ATCC BAA-1090 / DSM 15013)).